The chain runs to 56 residues: Ovomucoid (56 aa).

Residues 6–56 (VDCSDHPKPACLQEQKPLCGSDNKTYDNKCSFCNAVVDSNGTLTLSHFGKC) enclose the Kazal-like domain. 3 cysteine pairs are disulfide-bonded: cysteine 8/cysteine 38, cysteine 16/cysteine 35, and cysteine 24/cysteine 56. A glycan (N-linked (GlcNAc...) asparagine) is linked at asparagine 45.

The protein localises to the secreted. This chain is Ovomucoid, found in Penelope jacquacu (Spix's guan).